The sequence spans 145 residues: UPF0260 protein VV2402 (145 aa).

The protein belongs to the UPF0260 family.

This chain is UPF0260 protein VV2402, found in Vibrio vulnificus (strain YJ016).